The following is an 884-amino-acid chain: Formin-like protein 11 (884 aa).

Residues 1–18 (MVYFRQIFLMIIVVSLHC) form the signal peptide. A disordered region spans residues 89 to 143 (AESASFSPWPAPSPSPFPNGGPIESPAYPPAPPRPIPPHLRRPLPQRTHPLEQPE). Composition is skewed to pro residues over residues 97–107 (WPAPSPSPFPN) and 115–126 (AYPPAPPRPIPP). The chain crosses the membrane as a helical span at residues 158–178 (ILVPVVASTASAIGFVVCVVG). Disordered stretches follow at residues 307-384 (SSDD…FSNK), 416-469 (SFPI…APLP), and 512-532 (MQSSTKNEEGKSKTPSPGKHL). Over residues 329-343 (SNASSASGSVNVGSS) the composition is skewed to low complexity. Positions 346 to 358 (FSEHKLDIPECSR) are enriched in basic and acidic residues. Composition is skewed to pro residues over residues 367–379 (APPPPPPPPPPLP) and 425–436 (QPRPPPPPPPPQ). Residues 461-884 (LGKDGAPLPK…NSPSPLAPFR (424 aa)) form the FH2 domain.

Belongs to the formin-like family. Class-I subfamily.

It localises to the membrane. Its function is as follows. Might be involved in the organization and polarity of the actin cytoskeleton. This chain is Formin-like protein 11 (FH11), found in Arabidopsis thaliana (Mouse-ear cress).